The following is a 294-amino-acid chain: Indole-3-glycerol phosphate synthase (294 aa).

The protein belongs to the TrpC family.

The catalysed reaction is 1-(2-carboxyphenylamino)-1-deoxy-D-ribulose 5-phosphate + H(+) = (1S,2R)-1-C-(indol-3-yl)glycerol 3-phosphate + CO2 + H2O. Its pathway is amino-acid biosynthesis; L-tryptophan biosynthesis; L-tryptophan from chorismate: step 4/5. This is Indole-3-glycerol phosphate synthase from Synechococcus sp. (strain WH7803).